A 323-amino-acid polypeptide reads, in one-letter code: ATP synthase gamma chain (323 aa).

Belongs to the ATPase gamma chain family. In terms of assembly, F-type ATPases have 2 components, CF(1) - the catalytic core - and CF(0) - the membrane proton channel. CF(1) has five subunits: alpha(3), beta(3), gamma(1), delta(1), epsilon(1). CF(0) has three main subunits: a, b and c.

The protein resides in the cell membrane. Functionally, produces ATP from ADP in the presence of a proton gradient across the membrane. The gamma chain is believed to be important in regulating ATPase activity and the flow of protons through the CF(0) complex. The protein is ATP synthase gamma chain of Nocardia farcinica (strain IFM 10152).